The chain runs to 311 residues: Ribosomal RNA small subunit methyltransferase H (311 aa).

S-adenosyl-L-methionine is bound by residues 32 to 34 (AGH), aspartate 52, phenylalanine 79, aspartate 100, and glutamine 107.

It belongs to the methyltransferase superfamily. RsmH family.

It localises to the cytoplasm. The catalysed reaction is cytidine(1402) in 16S rRNA + S-adenosyl-L-methionine = N(4)-methylcytidine(1402) in 16S rRNA + S-adenosyl-L-homocysteine + H(+). Its function is as follows. Specifically methylates the N4 position of cytidine in position 1402 (C1402) of 16S rRNA. The protein is Ribosomal RNA small subunit methyltransferase H of Staphylococcus haemolyticus (strain JCSC1435).